Reading from the N-terminus, the 949-residue chain is Insulin receptor substrate 1 (949 aa).

In terms of domain architecture, PH spans 8 to 109; it reads GMALSGYLKK…WLDKLLVLQR (102 aa). The IRS-type PTB domain occupies 122–236; the sequence is YDQVWQVVIQ…SAMSAKTESN (115 aa). A disordered region spans residues 247–270; sequence PDLSHEPMRKRSSSANEASKPINV. A phosphoserine mark is found at Ser286, Ser287, and Ser342. Residues 304 to 345 are compositionally biased toward polar residues; that stretch reads RNGTLSESSNQTYFGSNHGLRSNTISGNRPHSTNKHSNSPTF. A disordered region spans residues 304 to 373; sequence RNGTLSESSN…SDDNGSYSHY (70 aa). The residue at position 410 (Tyr410) is a Phosphotyrosine; by INSR. Residues 410-413 carry the YXXM motif 1 motif; it reads YIPM. Positions 530-556 are disordered; the sequence is RSQSSITKEGSGYGTSGNRQKKSTSAP. Ser554 bears the Phosphoserine mark. A YXXM motif 2 motif is present at residues 640 to 643; the sequence is YLEM. Positions 696–706 are enriched in basic and acidic residues; the sequence is REQTTSEEKKS. The interval 696 to 718 is disordered; the sequence is REQTTSEEKKSNSPLNEKPFSLK. Tyr892 carries the post-translational modification Phosphotyrosine; by INSR. The disordered stretch occupies residues 906–949; sequence AKYLKRGSRESPPVSACPEDGNTYAKIDFDQSDSSSSSSNIFNT. Phosphoserine is present on residues Ser913 and Ser916. Tyr929 is modified (phosphotyrosine; by INSR). The span at 937-949 shows a compositional bias: low complexity; it reads SDSSSSSSNIFNT.

In terms of assembly, bindings to phosphatidylinositol 3-kinase and SHP2.

Its function is as follows. Activates phosphatidylinositol 3-kinase when bound to the regulatory p85 subunit. May mediate the control of various cellular processes by insulin-like peptides. When phosphorylated by the insulin receptor binds specifically to various cellular proteins containing SH2 domains. Involved in control of cell proliferation, cell size, and body and organ growth throughout development. Also has a role in a signaling pathway controlling the physiological response required to endure periods of low nutrient conditions. Insulin/insulin-like growth factor (IGF) signaling pathway has a role in regulating aging and is necessary in the ovary for vitellogenic maturation. This is Insulin receptor substrate 1 from Drosophila yakuba (Fruit fly).